The chain runs to 90 residues: Beta-microseminoprotein (90 aa).

Disulfide bonds link Cys2/Cys16, Cys34/Cys70, Cys37/Cys46, Cys39/Cys47, and Cys61/Cys84. Val90 carries the valine amide modification.

This sequence belongs to the beta-microseminoprotein family.

It is found in the secreted. This Struthio camelus (Common ostrich) protein is Beta-microseminoprotein (MSMB).